We begin with the raw amino-acid sequence, 261 residues long: Kallikrein 1-related peptidase b16 (261 aa).

The signal sequence occupies residues 1–18; the sequence is MWFLILFLALSLGGIDAA. Positions 19–24 are cleaved as a propeptide — activation peptide; sequence PPVQSR. The 234-residue stretch at 25 to 258 folds into the Peptidase S1 domain; that stretch reads IVGGFKCEKN…FNSWIKDTMM (234 aa). 5 disulfide bridges follow: Cys-31-Cys-173, Cys-50-Cys-66, Cys-152-Cys-219, Cys-184-Cys-198, and Cys-209-Cys-234. The active-site Charge relay system is the His-65. Asn-102 carries N-linked (GlcNAc...) asparagine glycosylation. Asp-120 serves as the catalytic Charge relay system. Ser-213 serves as the catalytic Charge relay system.

The protein belongs to the peptidase S1 family. Kallikrein subfamily.

It catalyses the reaction Cleavage of the Leu-|-Leu bond in synthetic tetradecapeptide renin substrate, to produce angiotensin I, but not active on natural angiotensinogen. Also hydrolyzes Bz-Arg-p-nitroanilide.. This is Kallikrein 1-related peptidase b16 (Klk1b16) from Mus musculus (Mouse).